The primary structure comprises 360 residues: Histidinol-phosphate aminotransferase (360 aa).

N6-(pyridoxal phosphate)lysine is present on K222.

Belongs to the class-II pyridoxal-phosphate-dependent aminotransferase family. Histidinol-phosphate aminotransferase subfamily. In terms of assembly, homodimer. It depends on pyridoxal 5'-phosphate as a cofactor.

The enzyme catalyses L-histidinol phosphate + 2-oxoglutarate = 3-(imidazol-4-yl)-2-oxopropyl phosphate + L-glutamate. The protein operates within amino-acid biosynthesis; L-histidine biosynthesis; L-histidine from 5-phospho-alpha-D-ribose 1-diphosphate: step 7/9. The protein is Histidinol-phosphate aminotransferase of Listeria welshimeri serovar 6b (strain ATCC 35897 / DSM 20650 / CCUG 15529 / CIP 8149 / NCTC 11857 / SLCC 5334 / V8).